The primary structure comprises 193 residues: Imidazoleglycerol-phosphate dehydratase (193 aa).

Belongs to the imidazoleglycerol-phosphate dehydratase family.

The protein localises to the cytoplasm. It catalyses the reaction D-erythro-1-(imidazol-4-yl)glycerol 3-phosphate = 3-(imidazol-4-yl)-2-oxopropyl phosphate + H2O. It functions in the pathway amino-acid biosynthesis; L-histidine biosynthesis; L-histidine from 5-phospho-alpha-D-ribose 1-diphosphate: step 6/9. In Saccharolobus islandicus (strain Y.G.57.14 / Yellowstone #1) (Sulfolobus islandicus), this protein is Imidazoleglycerol-phosphate dehydratase.